The primary structure comprises 76 residues: uncharacterized protein (76 aa).

It localises to the plastid. This is an uncharacterized protein from Euglena longa (Euglenophycean alga).